Reading from the N-terminus, the 259-residue chain is Glutathione S-transferase domain-containing protein DDB_G0274705 (259 aa).

The 90-residue stretch at 7-96 folds into the GST N-terminal domain; it reads KIDYIFYTNN…YLAQKFNTFL (90 aa). A GST C-terminal domain is found at 102-232; the sequence is NPLENSEVIT…GFKNFNPSLL (131 aa).

It belongs to the GST superfamily.

This chain is Glutathione S-transferase domain-containing protein DDB_G0274705, found in Dictyostelium discoideum (Social amoeba).